A 420-amino-acid polypeptide reads, in one-letter code: Histidine--tRNA ligase (420 aa).

This sequence belongs to the class-II aminoacyl-tRNA synthetase family. Homodimer.

The protein localises to the cytoplasm. The catalysed reaction is tRNA(His) + L-histidine + ATP = L-histidyl-tRNA(His) + AMP + diphosphate + H(+). The protein is Histidine--tRNA ligase (hisS) of Thermotoga maritima (strain ATCC 43589 / DSM 3109 / JCM 10099 / NBRC 100826 / MSB8).